The primary structure comprises 151 residues: Glutamate mutase sigma subunit 1 (151 aa).

Residues 7-140 (PRTVILGVIG…EMLREDLQLT (134 aa)) enclose the B12-binding domain. Residues 17–21 (SDAHV), H20, 65–67 (SSL), and 96–100 (NLAVG) each bind adenosylcob(III)alamin.

The protein belongs to the methylaspartate mutase GlmS subunit family. As to quaternary structure, heterotetramer composed of 2 epsilon subunits (GlmE) and 2 sigma subunits (GlmS). GlmE exists as a homodimer and GlmS as a monomer. The cofactor is adenosylcob(III)alamin.

The enzyme catalyses (2S,3S)-3-methyl-L-aspartate = L-glutamate. It participates in amino-acid degradation; L-glutamate degradation via mesaconate pathway; acetate and pyruvate from L-glutamate: step 1/4. In terms of biological role, catalyzes the carbon skeleton rearrangement of L-glutamate to L-threo-3-methylaspartate ((2S,3S)-3-methylaspartate). The protein is Glutamate mutase sigma subunit 1 of Haloarcula marismortui (strain ATCC 43049 / DSM 3752 / JCM 8966 / VKM B-1809) (Halobacterium marismortui).